A 276-amino-acid chain; its full sequence is Proteasome subunit beta type-8 (276 aa).

Residues 1 to 72 constitute a propeptide, removed in mature form; that stretch reads MALLDLCGAP…RKVQIEMAHG (72 aa). Catalysis depends on T73, which acts as the Nucleophile.

It belongs to the peptidase T1B family. As to quaternary structure, the 26S proteasome consists of a 20S proteasome core and two 19S regulatory subunits. The 20S proteasome core is composed of 28 subunits that are arranged in four stacked rings, resulting in a barrel-shaped structure. The two end rings are each formed by seven alpha subunits, and the two central rings are each formed by seven beta subunits. The catalytic chamber with the active sites is on the inside of the barrel. Component of the immunoproteasome, where it displaces the equivalent housekeeping subunit PSMB5. Component of the spermatoproteasome, a form of the proteasome specifically found in testis. Directly interacts with POMP. Interacts with TAP1. In terms of processing, autocleaved. The resulting N-terminal Thr residue of the mature subunit is responsible for the nucleophile proteolytic activity.

The protein resides in the cytoplasm. Its subcellular location is the nucleus. It catalyses the reaction Cleavage of peptide bonds with very broad specificity.. In terms of biological role, the proteasome is a multicatalytic proteinase complex which is characterized by its ability to cleave peptides with Arg, Phe, Tyr, Leu, and Glu adjacent to the leaving group at neutral or slightly basic pH. The proteasome has an ATP-dependent proteolytic activity. This subunit is involved in antigen processing to generate class I binding peptides. May participate in the generation of spliced peptides resulting from the ligation of two separate proteasomal cleavage products that are not contiguous in the parental protein. Required for adipocyte differentiation. This chain is Proteasome subunit beta type-8 (Psmb8), found in Rattus norvegicus (Rat).